The following is a 269-amino-acid chain: GTP cyclohydrolase FolE2 (269 aa).

It belongs to the GTP cyclohydrolase IV family.

The catalysed reaction is GTP + H2O = 7,8-dihydroneopterin 3'-triphosphate + formate + H(+). The protein operates within cofactor biosynthesis; 7,8-dihydroneopterin triphosphate biosynthesis; 7,8-dihydroneopterin triphosphate from GTP: step 1/1. Converts GTP to 7,8-dihydroneopterin triphosphate. This chain is GTP cyclohydrolase FolE2, found in Azoarcus sp. (strain BH72).